The following is a 239-amino-acid chain: Large ribosomal subunit protein uL3 (239 aa).

2 disordered regions span residues 140 to 164 (SHRS…KMPG) and 211 to 239 (PLPK…QEGA). Residue glutamine 151 is modified to N5-methylglutamine.

This sequence belongs to the universal ribosomal protein uL3 family. Part of the 50S ribosomal subunit. Forms a cluster with proteins L14 and L19. Methylated by PrmB.

One of the primary rRNA binding proteins, it binds directly near the 3'-end of the 23S rRNA, where it nucleates assembly of the 50S subunit. The polypeptide is Large ribosomal subunit protein uL3 (Bradyrhizobium sp. (strain ORS 278)).